Here is a 707-residue protein sequence, read N- to C-terminus: Integrator complex subunit 13 (707 aa).

Positions Pro565–Pro625 are enriched in basic and acidic residues. The tract at residues Pro565 to Pro651 is disordered. A coiled-coil region spans residues Glu567 to Lys622. A Nuclear localization signal (NLS) motif is present at residues Lys573–Glu583. The interval Gly650 to Gly695 is cleavage module binding motif (CMBM).

This sequence belongs to the Integrator subunit 13 family. As to quaternary structure, component of the Integrator complex, composed of core subunits INTS1, INTS2, INTS3, INTS4, INTS5, INTS6, INTS7, INTS8, INTS9/RC74, INTS10, INTS11/CPSF3L, INTS12, INTS13, INTS14 and INTS15. The core complex associates with protein phosphatase 2A subunits PPP2CA and PPP2R1A, to form the Integrator-PP2A (INTAC) complex. INTS13 is part of the tail subcomplex, composed of INTS10, INTS13, INTS14 and INTS15.

It is found in the nucleus. The protein localises to the cytoplasm. Component of the integrator complex, a multiprotein complex that terminates RNA polymerase II (Pol II) transcription in the promoter-proximal region of genes. The integrator complex provides a quality checkpoint during transcription elongation by driving premature transcription termination of transcripts that are unfavorably configured for transcriptional elongation: the complex terminates transcription by (1) catalyzing dephosphorylation of the C-terminal domain (CTD) of Pol II subunit POLR2A/RPB1 and SUPT5H/SPT5, (2) degrading the exiting nascent RNA transcript via endonuclease activity and (3) promoting the release of Pol II from bound DNA. The integrator complex is also involved in terminating the synthesis of non-coding Pol II transcripts, such as enhancer RNAs (eRNAs), small nuclear RNAs (snRNAs), telomerase RNAs and long non-coding RNAs (lncRNAs). Within the integrator complex, INTS13 is part of the integrator tail module and acts as a platform for the recruitment of transcription factors at promoters. The sequence is that of Integrator complex subunit 13 from Xenopus tropicalis (Western clawed frog).